A 638-amino-acid chain; its full sequence is Phosphomethylpyrimidine synthase (638 aa).

Substrate contacts are provided by residues N233, M262, Y291, H327, 347–349 (SRG), 388–391 (DGLR), and E427. Position 431 (H431) interacts with Zn(2+). Y454 is a substrate binding site. Zn(2+) is bound at residue H495. [4Fe-4S] cluster-binding residues include C575, C578, and C583.

This sequence belongs to the ThiC family. In terms of assembly, homodimer. Requires [4Fe-4S] cluster as cofactor.

The enzyme catalyses 5-amino-1-(5-phospho-beta-D-ribosyl)imidazole + S-adenosyl-L-methionine = 4-amino-2-methyl-5-(phosphooxymethyl)pyrimidine + CO + 5'-deoxyadenosine + formate + L-methionine + 3 H(+). Its pathway is cofactor biosynthesis; thiamine diphosphate biosynthesis. Catalyzes the synthesis of the hydroxymethylpyrimidine phosphate (HMP-P) moiety of thiamine from aminoimidazole ribotide (AIR) in a radical S-adenosyl-L-methionine (SAM)-dependent reaction. This chain is Phosphomethylpyrimidine synthase, found in Saccharophagus degradans (strain 2-40 / ATCC 43961 / DSM 17024).